Consider the following 405-residue polypeptide: Arginine biosynthesis bifunctional protein ArgJ (405 aa).

Substrate-binding residues include Thr152, Lys178, Thr189, Glu276, Asn400, and Thr405. Thr189 functions as the Nucleophile in the catalytic mechanism.

It belongs to the ArgJ family. Heterotetramer of two alpha and two beta chains.

It localises to the cytoplasm. It catalyses the reaction N(2)-acetyl-L-ornithine + L-glutamate = N-acetyl-L-glutamate + L-ornithine. The enzyme catalyses L-glutamate + acetyl-CoA = N-acetyl-L-glutamate + CoA + H(+). It participates in amino-acid biosynthesis; L-arginine biosynthesis; L-ornithine and N-acetyl-L-glutamate from L-glutamate and N(2)-acetyl-L-ornithine (cyclic): step 1/1. Its pathway is amino-acid biosynthesis; L-arginine biosynthesis; N(2)-acetyl-L-ornithine from L-glutamate: step 1/4. In terms of biological role, catalyzes two activities which are involved in the cyclic version of arginine biosynthesis: the synthesis of N-acetylglutamate from glutamate and acetyl-CoA as the acetyl donor, and of ornithine by transacetylation between N(2)-acetylornithine and glutamate. This is Arginine biosynthesis bifunctional protein ArgJ from Pseudomonas aeruginosa (strain ATCC 15692 / DSM 22644 / CIP 104116 / JCM 14847 / LMG 12228 / 1C / PRS 101 / PAO1).